Reading from the N-terminus, the 320-residue chain is Large ribosomal subunit protein uL10y (320 aa).

The interval 289–320 (AGGGAPAAAKVEEKEESDEEDYGGDFGLFDEE) is disordered. Residues 302-320 (KEESDEEDYGGDFGLFDEE) are compositionally biased toward acidic residues. Phosphoserine is present on Ser305. Tyr310 is modified (phosphotyrosine).

This sequence belongs to the universal ribosomal protein uL10 family. P0 forms a pentameric complex by interaction with dimers of P1 and P2.

Functionally, ribosomal protein P0 is the functional equivalent of E.coli protein L10. The sequence is that of Large ribosomal subunit protein uL10y (RPP0B) from Arabidopsis thaliana (Mouse-ear cress).